A 192-amino-acid polypeptide reads, in one-letter code: Xanthine phosphoribosyltransferase (192 aa).

The xanthine site is built by Leu20 and Asn27. A 5-phospho-alpha-D-ribose 1-diphosphate-binding site is contributed by 128–132; it reads AQGEA. Lys156 is a binding site for xanthine.

It belongs to the purine/pyrimidine phosphoribosyltransferase family. Xpt subfamily. As to quaternary structure, homodimer.

The protein localises to the cytoplasm. The enzyme catalyses XMP + diphosphate = xanthine + 5-phospho-alpha-D-ribose 1-diphosphate. The protein operates within purine metabolism; XMP biosynthesis via salvage pathway; XMP from xanthine: step 1/1. Converts the preformed base xanthine, a product of nucleic acid breakdown, to xanthosine 5'-monophosphate (XMP), so it can be reused for RNA or DNA synthesis. The polypeptide is Xanthine phosphoribosyltransferase (Lactobacillus helveticus (strain DPC 4571)).